Reading from the N-terminus, the 456-residue chain is UDP-N-acetylmuramate--L-alanine ligase (456 aa).

ATP is bound at residue 112-118 (GAHGKTS).

The protein belongs to the MurCDEF family.

Its subcellular location is the cytoplasm. The enzyme catalyses UDP-N-acetyl-alpha-D-muramate + L-alanine + ATP = UDP-N-acetyl-alpha-D-muramoyl-L-alanine + ADP + phosphate + H(+). It functions in the pathway cell wall biogenesis; peptidoglycan biosynthesis. Its function is as follows. Cell wall formation. In Desulforapulum autotrophicum (strain ATCC 43914 / DSM 3382 / VKM B-1955 / HRM2) (Desulfobacterium autotrophicum), this protein is UDP-N-acetylmuramate--L-alanine ligase.